Reading from the N-terminus, the 116-residue chain is Flagellar hook-basal body complex protein FliE (116 aa).

It belongs to the FliE family.

Its subcellular location is the bacterial flagellum basal body. The chain is Flagellar hook-basal body complex protein FliE from Rhizobium rhizogenes (strain K84 / ATCC BAA-868) (Agrobacterium radiobacter).